Here is a 148-residue protein sequence, read N- to C-terminus: SsrA-binding protein (148 aa).

The protein belongs to the SmpB family.

It localises to the cytoplasm. In terms of biological role, required for rescue of stalled ribosomes mediated by trans-translation. Binds to transfer-messenger RNA (tmRNA), required for stable association of tmRNA with ribosomes. tmRNA and SmpB together mimic tRNA shape, replacing the anticodon stem-loop with SmpB. tmRNA is encoded by the ssrA gene; the 2 termini fold to resemble tRNA(Ala) and it encodes a 'tag peptide', a short internal open reading frame. During trans-translation Ala-aminoacylated tmRNA acts like a tRNA, entering the A-site of stalled ribosomes, displacing the stalled mRNA. The ribosome then switches to translate the ORF on the tmRNA; the nascent peptide is terminated with the 'tag peptide' encoded by the tmRNA and targeted for degradation. The ribosome is freed to recommence translation, which seems to be the essential function of trans-translation. This Mycoplasma mycoides subsp. mycoides SC (strain CCUG 32753 / NCTC 10114 / PG1) protein is SsrA-binding protein.